Reading from the N-terminus, the 398-residue chain is S-adenosylmethionine synthase (398 aa).

136–141 (GTGSSD) is an ATP binding site.

The protein belongs to the AdoMet synthase 2 family. Requires Mg(2+) as cofactor.

The enzyme catalyses L-methionine + ATP + H2O = S-adenosyl-L-methionine + phosphate + diphosphate. Its pathway is amino-acid biosynthesis; S-adenosyl-L-methionine biosynthesis; S-adenosyl-L-methionine from L-methionine: step 1/1. In terms of biological role, catalyzes the formation of S-adenosylmethionine from methionine and ATP. This Methanosarcina barkeri (strain Fusaro / DSM 804) protein is S-adenosylmethionine synthase.